Here is a 269-residue protein sequence, read N- to C-terminus: LOB domain-containing protein 6 (269 aa).

The LOB domain occupies 37-138; that stretch reads SPCAACKFLR…QDLARAKFEL (102 aa).

This sequence belongs to the LOB domain-containing protein family.

Its subcellular location is the nucleus. In terms of biological role, negative regulator of cell proliferation in the adaxial side of leaves. Regulates the formation of a symmetric lamina and the establishment of venation. The protein is LOB domain-containing protein 6 (LBD6) of Oryza sativa subsp. indica (Rice).